The primary structure comprises 185 residues: MTETSFPGWHGTTIIGVKKNGKVVVAGDGQVSLGQTVIKGTARKVRRLTPGGHDVVAGFAGSTADAFTLLERLEAKLEATPGQLQRAAVELAKDWRTDKYLQKLEAMLIVTDGSLLLVITGAGDVLEPEHDIAAIGSGGNFALAAARGLMEADFDAETIARKAMQIAADICVYTNGNLTVEAIDA.

Thr12 is an active-site residue. Positions 168, 171, and 174 each coordinate Na(+).

It belongs to the peptidase T1B family. HslV subfamily. As to quaternary structure, a double ring-shaped homohexamer of HslV is capped on each side by a ring-shaped HslU homohexamer. The assembly of the HslU/HslV complex is dependent on binding of ATP.

Its subcellular location is the cytoplasm. The catalysed reaction is ATP-dependent cleavage of peptide bonds with broad specificity.. With respect to regulation, allosterically activated by HslU binding. Its function is as follows. Protease subunit of a proteasome-like degradation complex believed to be a general protein degrading machinery. The protein is ATP-dependent protease subunit HslV of Dinoroseobacter shibae (strain DSM 16493 / NCIMB 14021 / DFL 12).